Here is a 1133-residue protein sequence, read N- to C-terminus: Guanine nucleotide-binding protein G(s) subunit alpha isoforms XLas (1133 aa).

4 disordered regions span residues 1–195, 322–552, 611–648, and 724–744; these read MGMF…PEAL, DDTA…VPGA, SASA…WPDK, and RSRS…RKQM. Low complexity predominate over residues 31–48; it reads LEAPGAAAPGAGAGPAEE. Residues 347-362 show a composition bias toward basic and acidic residues; the sequence is DKSECAERPPVEREAA. Low complexity-rich tracts occupy residues 391–404, 459–471, 482–498, 515–525, and 535–552; these read PEAM…AAQA, GGAA…TPAE, AEPA…ESAS, ATLAEPAARAA, and RAVP…VPGA. The span at 633 to 643 shows a compositional bias: pro residues; sequence PPTPRPPPRPT. Basic and acidic residues predominate over residues 732 to 744; it reads KAKDPMEERRKQM. Residues 737-761 are a coiled coil; sequence MEERRKQMRKEAIEMREQKRADKKR. Residues 778–1133 form the G-alpha domain; the sequence is CTHRLLLLGA…RMHLRQYELL (356 aa). The segment at 781–794 is G1 motif; sequence RLLLLGAGESGKST. 786 to 794 provides a ligand contact to GTP; the sequence is GAGESGKST. Residue S793 participates in Mg(2+) binding. The tract at residues 807-828 is disordered; it reads FNGEGGEEDPQAARSNSDGEKA. The interval 935–943 is G2 motif; that stretch reads DLLRCRVLT. Residues 936–943, 962–966, and 1031–1034 each bind GTP; these read LLRCRVLT, DVGGQ, and NKQD. The residue at position 940 (R940) is an ADP-ribosylarginine; by cholera toxin. Mg(2+) is bound at residue T943. Positions 958 to 967 are G3 motif; that stretch reads FHMFDVGGQR. The segment at 1027–1034 is G4 motif; it reads ILFLNKQD. Phosphoserine is present on S1091. Residues 1103–1108 are G5 motif; it reads TCAVDT. A1105 contacts GTP.

This sequence belongs to the G-alpha family. G(s) subfamily. As to quaternary structure, g proteins are composed of 3 units; alpha, beta and gamma. The alpha chain contains the guanine nucleotide binding site. Interacts through its N-terminal region with ALEX which is produced from the same locus in a different open reading frame. This interaction may inhibit its adenylyl cyclase-stimulating activity. Interacts with MAGED2.

It is found in the cell membrane. The protein resides in the apical cell membrane. It catalyses the reaction GTP + H2O = GDP + phosphate + H(+). Guanine nucleotide-binding proteins (G proteins) function as transducers in numerous signaling pathways controlled by G protein-coupled receptors (GPCRs). The alpha chain contains the guanine nucleotide binding site and alternates between an active, GTP-bound state and an inactive, GDP-bound state. Signaling by an activated GPCR promotes GDP release and GTP binding. The alpha subunit has a low GTPase activity that converts bound GTP to GDP, thereby terminating the signal. Both GDP release and GTP hydrolysis are modulated by numerous regulatory proteins. Signaling involves the activation of adenylyl cyclases, resulting in increased levels of the signaling molecule cAMP. GNAS functions downstream of several GPCRs, including beta-adrenergic receptors. XLas isoforms interact with the same set of receptors as Gnas isoforms. In Mus musculus (Mouse), this protein is Guanine nucleotide-binding protein G(s) subunit alpha isoforms XLas.